Here is a 72-residue protein sequence, read N- to C-terminus: Translation initiation factor IF-1 (72 aa).

The S1-like domain occupies 1–72; that stretch reads MSKEDAIEVM…TRGRIVYRYK (72 aa).

Belongs to the IF-1 family. In terms of assembly, component of the 30S ribosomal translation pre-initiation complex which assembles on the 30S ribosome in the order IF-2 and IF-3, IF-1 and N-formylmethionyl-tRNA(fMet); mRNA recruitment can occur at any time during PIC assembly.

The protein localises to the cytoplasm. Functionally, one of the essential components for the initiation of protein synthesis. Stabilizes the binding of IF-2 and IF-3 on the 30S subunit to which N-formylmethionyl-tRNA(fMet) subsequently binds. Helps modulate mRNA selection, yielding the 30S pre-initiation complex (PIC). Upon addition of the 50S ribosomal subunit IF-1, IF-2 and IF-3 are released leaving the mature 70S translation initiation complex. The sequence is that of Translation initiation factor IF-1 from Koribacter versatilis (strain Ellin345).